Consider the following 987-residue polypeptide: Voltage-gated delayed rectifier potassium channel KCNH1 (987 aa).

Residues 1–220 (MTMAGGRKGL…LHYCVFKTTW (220 aa)) are Cytoplasmic-facing. Residues 14-94 (QNTFLENIVR…QTFENYEMNS (81 aa)) enclose the PAS domain. The 53-residue stretch at 93 to 145 (NSFEILMYKKNRTPVWFFVKIAPIRNEQDKVVLFLCTFSDITAFKQPIEDDSC) folds into the PAC domain. A required for phosphatidylinositol bisphosphate binding region spans residues 151-162 (FARLTRALTSSR). A helical membrane pass occupies residues 221-241 (DWIILILTFYTAILVPYNVSF). Residues 242–248 (KTRQNNV) lie on the Extracellular side of the membrane. A helical membrane pass occupies residues 249–269 (AWLVVDSIVDVIFLVDIVLNF). At 270 to 290 (HTTFVGPAGEVISDPKLIRMN) the chain is on the cytoplasmic side. The helical transmembrane segment at 291 to 309 (YLKTWFVIDLLSCLPYDVI) threads the bilayer. The Extracellular segment spans residues 310–345 (NAFENVDEVSAFMGDPGKIGFADQIPPPLEGRESQG). The chain crosses the membrane as a helical; Voltage-sensor span at residues 346 to 368 (ISSLFSSLKVVRLLRLGRVARKL). Over 369-377 (DHYIEYGAA) the chain is Cytoplasmic. A helical membrane pass occupies residues 378–399 (VLVLLVCVFGLAAHWMACIWYS). Residues 400 to 448 (IGDYEIFDEDTKTIRNNSWLYQLAMDIGTPYQFNGSGSGKWEGGPSKNS) are Extracellular-facing. Residues Asn-415 and Asn-433 are each glycosylated (N-linked (GlcNAc...) asparagine). Positions 449–470 (VYISSLYFTMTSLTSVGFGNIA) form an intramembrane region, pore-forming. Positions 463 to 468 (SVGFGN) match the Selectivity filter motif. Over 471-477 (PSTDIEK) the chain is Extracellular. The helical transmembrane segment at 478–498 (IFAVAIMMIGSLLYATIFGNV) threads the bilayer. The Cytoplasmic portion of the chain corresponds to 499 to 987 (TTIFQQMYAN…ESERDIFGAS (489 aa)). The segment at 673–770 (KRDALQKVLE…LDDLDVEKGS (98 aa)) is calmodulin-binding. The tract at residues 699 to 701 (YNL) is interaction with cyclic nucleotide-binding pocket. Residues 922–962 (AAVLEVKHELKEDIKALSTKMTSIEKQLSEILRILTSRRSS) are CAD (involved in subunit assembly). Residues 960–987 (RSSQSPQELFEISRPQSPESERDIFGAS) form a disordered region. Phosphoserine occurs at positions 972, 976, and 979. Residues 978 to 987 (ESERDIFGAS) show a composition bias toward basic and acidic residues.

The protein belongs to the potassium channel family. H (Eag) (TC 1.A.1.20) subfamily. Kv10.1/KCNH1 sub-subfamily. In terms of assembly, homomultimer. The potassium channel is composed of a homo- or heterotetrameric complex of pore-forming alpha subunits that can associate with modulating beta subunits. Heteromultimer with KCNH5/EAG2. Interacts with ALG10B. Interacts with RABEP1. Interacts (via C-terminus) with CTTN. Interacts (via C-terminal cytoplasmic region) with Ca(2+)-bound calmodulin. In terms of processing, channel activity is regulated via tyrosine phosphorylation/dephosphorylation by SRC and PTPN6. Detected in cerebellum, cortex and retina.

The protein localises to the cell membrane. It is found in the nucleus inner membrane. It localises to the cell projection. The protein resides in the dendrite. Its subcellular location is the axon. The protein localises to the presynaptic cell membrane. It is found in the perikaryon. It localises to the postsynaptic density membrane. The protein resides in the early endosome membrane. The enzyme catalyses K(+)(in) = K(+)(out). Channel activity is inhibited by interaction with Ca(2+)-bound calmodulin. Interaction of a single pore-forming alpha subunit with a calmodulin chain is sufficient to promote channel closure. Extracellular magnesium ion concentrations up to 4 mM modulate channel activity by slowing down current activation in a reversible fashion. Channel activity is not regulated by cyclic nucleotides. Channel activity is inhibited by binding intracellular phosphatidylinositol-3,5-bisphosphate and phosphatidylinositol-4,5-bisphosphate (PIP2), but is not inhibited by phosphatidylinositol 4-phosphate. Its function is as follows. Pore-forming (alpha) subunit of a voltage-gated delayed rectifier potassium channel that mediates outward-rectifying potassium currents which, on depolarization, reaches a steady-state level and do not inactivate. The activation kinetics depend on the prepulse potential and external divalent cation concentration. With negative prepulses, the current activation is delayed and slowed down several fold, whereas more positive prepulses speed up activation. The time course of activation is biphasic with a fast and a slowly activating current component. Activates at more positive membrane potentials and exhibit a steeper activation curve. Channel properties are modulated by subunit assembly. Mediates IK(NI) current in myoblasts. Involved in the regulation of cell proliferation and differentiation, in particular adipogenic and osteogenic differentiation in bone marrow-derived mesenchymal stem cells (MSCs). The sequence is that of Voltage-gated delayed rectifier potassium channel KCNH1 from Bos taurus (Bovine).